Here is a 134-residue protein sequence, read N- to C-terminus: Profilin-2 (134 aa).

The cysteines at positions 13 and 118 are disulfide-linked. The short motif at 84 to 100 (AVIRGKKGSGGITIKET) is the Involved in PIP2 interaction element. Thr-114 carries the phosphothreonine modification.

Belongs to the profilin family. Occurs in many kinds of cells as a complex with monomeric actin in a 1:1 ratio. In terms of processing, phosphorylated by MAP kinases.

The protein localises to the cytoplasm. The protein resides in the cytoskeleton. Its function is as follows. Binds to actin and affects the structure of the cytoskeleton. At high concentrations, profilin prevents the polymerization of actin, whereas it enhances it at low concentrations. This is Profilin-2 from Olea europaea (Common olive).